The following is a 90-amino-acid chain: Small ribosomal subunit protein bS20 (90 aa).

Polar residues predominate over residues 1 to 10 (MANHKSTQKS). The tract at residues 1-25 (MANHKSTQKSIRQDQKRNLINKSRK) is disordered.

The protein belongs to the bacterial ribosomal protein bS20 family.

Its function is as follows. Binds directly to 16S ribosomal RNA. The protein is Small ribosomal subunit protein bS20 of Orientia tsutsugamushi (strain Boryong) (Rickettsia tsutsugamushi).